We begin with the raw amino-acid sequence, 198 residues long: Recombination protein RecR (198 aa).

The C4-type zinc finger occupies 57-72 (CSVCGHITENDPCYIC). One can recognise a Toprim domain in the interval 80–175 (SVICVVEDDK…KVTRLAQGLS (96 aa)).

This sequence belongs to the RecR family.

In terms of biological role, may play a role in DNA repair. It seems to be involved in an RecBC-independent recombinational process of DNA repair. It may act with RecF and RecO. The sequence is that of Recombination protein RecR from Staphylococcus haemolyticus (strain JCSC1435).